Reading from the N-terminus, the 161-residue chain is Putative pre-16S rRNA nuclease (161 aa).

Positions 141–161 (AAGSPPGALVPRNRVDPDRHA) are disordered.

It belongs to the YqgF nuclease family.

The protein resides in the cytoplasm. Could be a nuclease involved in processing of the 5'-end of pre-16S rRNA. This chain is Putative pre-16S rRNA nuclease, found in Clavibacter michiganensis subsp. michiganensis (strain NCPPB 382).